Consider the following 341-residue polypeptide: Phenylalanine--tRNA ligase alpha subunit (341 aa).

Residue E255 participates in Mg(2+) binding.

This sequence belongs to the class-II aminoacyl-tRNA synthetase family. Phe-tRNA synthetase alpha subunit type 1 subfamily. Tetramer of two alpha and two beta subunits. Requires Mg(2+) as cofactor.

It localises to the cytoplasm. It catalyses the reaction tRNA(Phe) + L-phenylalanine + ATP = L-phenylalanyl-tRNA(Phe) + AMP + diphosphate + H(+). The polypeptide is Phenylalanine--tRNA ligase alpha subunit (Natranaerobius thermophilus (strain ATCC BAA-1301 / DSM 18059 / JW/NM-WN-LF)).